The primary structure comprises 429 residues: Serine--tRNA ligase (429 aa).

L-serine is bound at residue 236–238 (TAE). 267–269 (RSE) provides a ligand contact to ATP. Position 290 (Glu290) interacts with L-serine. 354-357 (EISS) lines the ATP pocket. Position 390 (Ser390) interacts with L-serine.

It belongs to the class-II aminoacyl-tRNA synthetase family. Type-1 seryl-tRNA synthetase subfamily. Homodimer. The tRNA molecule binds across the dimer.

It localises to the cytoplasm. The catalysed reaction is tRNA(Ser) + L-serine + ATP = L-seryl-tRNA(Ser) + AMP + diphosphate + H(+). The enzyme catalyses tRNA(Sec) + L-serine + ATP = L-seryl-tRNA(Sec) + AMP + diphosphate + H(+). It functions in the pathway aminoacyl-tRNA biosynthesis; selenocysteinyl-tRNA(Sec) biosynthesis; L-seryl-tRNA(Sec) from L-serine and tRNA(Sec): step 1/1. Catalyzes the attachment of serine to tRNA(Ser). Is also able to aminoacylate tRNA(Sec) with serine, to form the misacylated tRNA L-seryl-tRNA(Sec), which will be further converted into selenocysteinyl-tRNA(Sec). The polypeptide is Serine--tRNA ligase (Alcanivorax borkumensis (strain ATCC 700651 / DSM 11573 / NCIMB 13689 / SK2)).